A 127-amino-acid polypeptide reads, in one-letter code: Holo-[acyl-carrier-protein] synthase (127 aa).

Mg(2+)-binding residues include aspartate 9 and glutamate 58.

This sequence belongs to the P-Pant transferase superfamily. AcpS family. Requires Mg(2+) as cofactor.

The protein localises to the cytoplasm. The catalysed reaction is apo-[ACP] + CoA = holo-[ACP] + adenosine 3',5'-bisphosphate + H(+). Transfers the 4'-phosphopantetheine moiety from coenzyme A to a Ser of acyl-carrier-protein. The sequence is that of Holo-[acyl-carrier-protein] synthase from Shewanella sp. (strain MR-7).